The chain runs to 319 residues: MQNRNTYEWAKKMTRLISVLVMIHIITRTSISNAYPIFAQQGYENPREATGRIVCANCHLAKKPVDIEVPQSVLPNTVFEAVVKIPYDMQMKQVLANGKKGALNVGAVLILPEGFELAPPDRISPEIRQKTGNLYFQNYRPNKKNIIVIGPVPGQKYSELVFPILSPDPSTDKEAHFLKYPIYVGGNRGRGQIYPDGSKSNNTVYSASATGRVSKILRKEKGGYEITIDNTSDGGQVVDIVPPGPELLISEGELIKVDQPLTNNPNLGGFGQGDAEIVLQDPLRVKGLLLFLASVILAQIFLVLKKKQFEKVQLAEMNL.

Residues 1 to 34 form the signal peptide; that stretch reads MQNRNTYEWAKKMTRLISVLVMIHIITRTSISNA. Residues Y35, C55, C58, and H59 each contribute to the heme site. A helical transmembrane segment spans residues 287–304; it reads GLLLFLASVILAQIFLVL.

It belongs to the cytochrome f family. In terms of assembly, the 4 large subunits of the cytochrome b6-f complex are cytochrome b6, subunit IV (17 kDa polypeptide, petD), cytochrome f and the Rieske protein, while the 4 small subunits are PetG, PetL, PetM and PetN. The complex functions as a dimer. Requires heme as cofactor.

It localises to the plastid. It is found in the chloroplast thylakoid membrane. Functionally, component of the cytochrome b6-f complex, which mediates electron transfer between photosystem II (PSII) and photosystem I (PSI), cyclic electron flow around PSI, and state transitions. In Pinus thunbergii (Japanese black pine), this protein is Cytochrome f (petA).